Reading from the N-terminus, the 247-residue chain is Probable transcriptional regulatory protein lpp1249 (247 aa).

Belongs to the TACO1 family.

The protein localises to the cytoplasm. This is Probable transcriptional regulatory protein lpp1249 from Legionella pneumophila (strain Paris).